Reading from the N-terminus, the 595-residue chain is Aspartate--tRNA(Asp/Asn) ligase (595 aa).

Glu-175 contributes to the L-aspartate binding site. Positions Gln-199–Lys-202 are aspartate. The L-aspartate site is built by Arg-221 and His-454. Residue Arg-221–Glu-223 coordinates ATP. An ATP-binding site is contributed by Glu-488. Residue Arg-495 participates in L-aspartate binding. Gly-540–Arg-543 contacts ATP.

Belongs to the class-II aminoacyl-tRNA synthetase family. Type 1 subfamily. In terms of assembly, homodimer.

It localises to the cytoplasm. The enzyme catalyses tRNA(Asx) + L-aspartate + ATP = L-aspartyl-tRNA(Asx) + AMP + diphosphate. Aspartyl-tRNA synthetase with relaxed tRNA specificity since it is able to aspartylate not only its cognate tRNA(Asp) but also tRNA(Asn). Reaction proceeds in two steps: L-aspartate is first activated by ATP to form Asp-AMP and then transferred to the acceptor end of tRNA(Asp/Asn). The sequence is that of Aspartate--tRNA(Asp/Asn) ligase from Rhizobium meliloti (strain 1021) (Ensifer meliloti).